Reading from the N-terminus, the 100-residue chain is Urease subunit gamma (100 aa).

This sequence belongs to the urease gamma subunit family. As to quaternary structure, heterotrimer of UreA (gamma), UreB (beta) and UreC (alpha) subunits. Three heterotrimers associate to form the active enzyme.

It is found in the cytoplasm. The catalysed reaction is urea + 2 H2O + H(+) = hydrogencarbonate + 2 NH4(+). The protein operates within nitrogen metabolism; urea degradation; CO(2) and NH(3) from urea (urease route): step 1/1. In Rhizobium rhizogenes (strain K84 / ATCC BAA-868) (Agrobacterium radiobacter), this protein is Urease subunit gamma.